The primary structure comprises 131 residues: Ribonuclease VapC3 (131 aa).

The PINc domain occupies 4–121; that stretch reads VVDASAIAAL…GKLLTLDRQL (118 aa). Positions 6, 100, and 118 each coordinate Mg(2+).

The protein belongs to the PINc/VapC protein family. Homodimer. Forms a complex with putative antitoxin VapB3, possibly VapB(2)-VapC(2). It depends on Mg(2+) as a cofactor.

Its activity is regulated as follows. Inhibited by EDTA. Its function is as follows. Toxic component of a type II toxin-antitoxin (TA) system. Has ribonuclease activity. In Pyrobaculum aerophilum (strain ATCC 51768 / DSM 7523 / JCM 9630 / CIP 104966 / NBRC 100827 / IM2), this protein is Ribonuclease VapC3.